The sequence spans 519 residues: 6-phosphofructo-2-kinase/fructose-2,6-bisphosphatase 2 (519 aa).

Polar residues predominate over residues 1–17 (MSENSTFSTEDSCNSSY). A disordered region spans residues 1–22 (MSENSTFSTEDSCNSSYKPHAS). N-acetylserine is present on S2. Residues 2–251 (SENSTFSTED…VYYLMNIHVH (250 aa)) form a 6-phosphofructo-2-kinase region. A Phosphoserine; by PKA modification is found at S32. ATP is bound at residue 48–56 (GLPARGKTY). R81 and R105 together coordinate beta-D-fructose 6-phosphate. D131 is a catalytic residue. Beta-D-fructose 6-phosphate contacts are provided by T133 and R139. Residue C161 is part of the active site. An ATP-binding site is contributed by 170–175 (NILEVK). Beta-D-fructose 6-phosphate is bound by residues K175, R196, and Y200. Residues 252–519 (PRTIYLCRHG…PKTQVSIPVV (268 aa)) form a fructose-2,6-bisphosphatase region. R259 contacts beta-D-fructose 2,6-bisphosphate. The active-site Tele-phosphohistidine intermediate is the H260. Beta-D-fructose 2,6-bisphosphate contacts are provided by N266 and G272. E329 (proton donor/acceptor) is an active-site residue. Beta-D-fructose 2,6-bisphosphate contacts are provided by Y340, R354, K358, Y369, Q395, and R399. 351 to 354 (FALR) contacts ATP. ATP is bound by residues 395 to 399 (QAVMR) and Y431. Residues 448-493 (HRDKPTHNFPKSQTPVRMRRNSFTPLSSSNTIRRPRNYSVGSRPLK) are disordered. A compositionally biased stretch (polar residues) spans 456–479 (FPKSQTPVRMRRNSFTPLSSSNTI). The residue at position 469 (S469) is a Phosphoserine. Residue T471 is modified to Phosphothreonine. T478 is modified (phosphothreonine; by PKC). 2 positions are modified to phosphoserine: S486 and S496. A disordered region spans residues 500-519 (ALDMQEGADQPKTQVSIPVV). Residues 510–519 (PKTQVSIPVV) are compositionally biased toward polar residues.

It in the C-terminal section; belongs to the phosphoglycerate mutase family. Homodimer. Forms a heterodimer with PFKFB3. Post-translationally, phosphorylation by AMPK stimulates activity. As to expression, highest levels in kidney; also found in heart, brain, spleen, lung, liver, skeletal muscle and testis.

It catalyses the reaction beta-D-fructose 2,6-bisphosphate + H2O = beta-D-fructose 6-phosphate + phosphate. The enzyme catalyses beta-D-fructose 6-phosphate + ATP = beta-D-fructose 2,6-bisphosphate + ADP + H(+). With respect to regulation, phosphorylation results in the activation of the kinase activity. Functionally, synthesis and degradation of fructose 2,6-bisphosphate. The polypeptide is 6-phosphofructo-2-kinase/fructose-2,6-bisphosphatase 2 (Pfkfb2) (Mus musculus (Mouse)).